Here is a 452-residue protein sequence, read N- to C-terminus: Down-regulator of invasive growth 1 (452 aa).

Disordered regions lie at residues 1 to 145 and 262 to 311; these read MAVS…SAPA and RNKR…ADLR. Polar residues-rich tracts occupy residues 12 to 22 and 35 to 53; these read EDTSIAKSTQD and KGSS…SVGQ. S45 is subject to Phosphoserine. Residues 61–77 show a composition bias toward acidic residues; the sequence is PEEDDSGDKEADHEDSE. Residues 81-100 are compositionally biased toward basic residues; it reads AKKRKAQPLKNPKKSLKRGR. Polar residues-rich tracts occupy residues 107-116, 124-145, 269-281, and 291-307; these read LSDSNTNTHG, LASS…SAPA, SYDS…ASTG, and RNSS…TQQR. S126, S142, S272, and S275 each carry phosphoserine. Positions 212 to 452 are interaction with FUS3 and KSS1; that stretch reads IPPPHMLNKP…KSSSHHRTGK (241 aa). The residue at position 330 (S330) is a Phosphoserine. Positions 331–348 are enriched in low complexity; that stretch reads ANTKARSASTSTSTSTST. The interval 331-395 is disordered; it reads ANTKARSAST…QRTSQPQQQS (65 aa). Residues 349-361 are compositionally biased toward basic and acidic residues; the sequence is NRDRSSWHEAEPN. Positions 362–372 are enriched in acidic residues; that stretch reads KDEEEGTDLAI. Low complexity predominate over residues 378–395; it reads PTPTFTTFQRTSQPQQQS. Phosphothreonine is present on T379. Residues S395 and S428 each carry the phosphoserine modification.

In terms of assembly, forms a complex with DIG2, STE12 and either FUS3 or KSS1. The interaction of FUS3 with STE12 depends on the presence of both DIG1 and DIG2. STE12 is lost from FUS3/DIG1/DIG2 complex after pheromone treatment. DIG1 and DIG2 have also been reported to interact with CLN1 and CLN2. Phosphorylated by FUS3 and KSS1, in a pheromone-stimulated manner. Phosphorylation reduces the affinity for STE12.

It localises to the nucleus. Its function is as follows. DIG1 and DIG2 are negative regulators of the filamentation and pheromone induced mating program. DIG1 and DIG2 inhibit the transcriptional activity of STE12 by direct protein-protein interaction. DIG1 colocalizes to promoters with STE12 and redistributes with it during induction of filamentation (by butanol) or mating (by pheromone) to program specific genes, but binding of DIG1 to STE12 is reduced by pheromone treatment. The sequence is that of Down-regulator of invasive growth 1 (DIG1) from Saccharomyces cerevisiae (strain ATCC 204508 / S288c) (Baker's yeast).